The sequence spans 865 residues: High affinity cAMP-specific and IBMX-insensitive 3',5'-cyclic phosphodiesterase 8B (865 aa).

Disordered stretches follow at residues 17 to 40 (CRDSDESNSPRQTSSVSQGPTAPL) and 52 to 92 (AMPP…TCRG). Residues 23 to 36 (SNSPRQTSSVSQGP) show a composition bias toward polar residues. Over residues 75 to 90 (GSGSSTGSSGPATTTC) the composition is skewed to low complexity. The PAS domain maps to 247–318 (ACNSVFTALD…DTINTCIKKG (72 aa)). The disordered stretch occupies residues 373–415 (IHRDSGDNSQTEPHSFRHKSRRKESIDVKSISSRGSDAPSLQN). Residues 402–415 (SISSRGSDAPSLQN) are compositionally biased toward polar residues. Phosphoserine is present on Ser497. The PDEase domain occupies 519–855 (TINDVPPSIA…KHWKTLDDLK (337 aa)). The active-site Proton donor is the His595. Positions 599, 635, and 636 each coordinate a divalent metal cation. Residues Ser731 and Ser734 each carry the phosphoserine modification. Asp761 contributes to the a divalent metal cation binding site.

It belongs to the cyclic nucleotide phosphodiesterase family. PDE8 subfamily. It depends on a divalent metal cation as a cofactor. Widely expressed.

It catalyses the reaction 3',5'-cyclic AMP + H2O = AMP + H(+). It participates in purine metabolism; 3',5'-cyclic AMP degradation; AMP from 3',5'-cyclic AMP: step 1/1. Functionally, hydrolyzes the second messenger cAMP, which is a key regulator of many important physiological processes. May be involved in specific signaling in the thyroid gland. This is High affinity cAMP-specific and IBMX-insensitive 3',5'-cyclic phosphodiesterase 8B (Pde8b) from Mus musculus (Mouse).